The primary structure comprises 587 residues: MGKSTKWLKNVLLGKKTSKSSGSKDKERVVSGKEVLVTSKVEESDVVSDLPSFEVAETNTVDRSGGMLETQNVGPEEISDDEIELPEGKSTDSQNVAPVQDHSLSDAERIQREIAATSVQAAFRGYLARRAFWALKGIIRLQALIRGHLVRRQAVATLFSVMGIVRLQAFARGREIRKSDIGVQVYRKCRLQLLQGNKLANPTDAYLGIKKLTANAFAQKLLASSPKVLPVHAYDTSNPNSNLIWLENWSASCFWKPVPQPKKTISRKPQNRLLVEAESAKPKKSVRKVPASNFESSSVQTSFEFEKPKRSFRKVSSQSIEPPAVEDPQIELEKVKRSLRKVHNPVVESSIQPQRSPRKEVEKPKLGVEKTRESSYPLVHETAEEPVNVCDEKKKQEISEQPEEEVHALEMEVHTPGPLETNEALDSSLVNQIDSNEKAMVEEKPSMEKDTKEEKTPKPNNKENSAGKENQKSRKKGSATSKTEREESNGHHETSPSIPSYMQATKSAKAKLRLQGSPKSAEQDGTEKATVPRRHSLPSPGNGRITSHSPRTTRLANSGDKTGNKKEKPLLSSREGNAKTTPAERKR.

The tract at residues 57 to 80 is disordered; it reads ETNTVDRSGGMLETQNVGPEEISD. Residue S79 is modified to Phosphoserine. 3 IQ domains span residues 112 to 140, 141 to 163, and 164 to 188; these read REIA…GIIR, LQAL…SVMG, and IVRL…VYRK. The interval 149 to 159 is calmodulin-binding; it reads LVRRQAVATLF. A Nuclear localization signal motif is present at residues 176-183; sequence IRKSDIGV. Positions 344-587 are disordered; it reads NPVVESSIQP…AKTTPAERKR (244 aa). Composition is skewed to basic and acidic residues over residues 357 to 373 and 390 to 413; these read PRKE…KTRE and CDEK…EMEV. Residues 424 to 434 are compositionally biased toward polar residues; the sequence is ALDSSLVNQID. Composition is skewed to basic and acidic residues over residues 435–472 and 482–494; these read SNEK…ENQK and KTER…HHET. Polar residues-rich tracts occupy residues 495 to 506 and 544 to 561; these read SPSIPSYMQATK and RITS…SGDK.

Belongs to the IQD family. Binds to multiple calmodulin (CaM) in the presence of Ca(2+) and CaM-like proteins.

The protein localises to the nucleus. It is found in the nucleus envelope. The protein resides in the cytoplasm. It localises to the cytoskeleton. Its subcellular location is the cell membrane. Its function is as follows. May be involved in cooperative interactions with calmodulins or calmodulin-like proteins. Recruits calmodulin proteins to microtubules, thus being a potential scaffold in cellular signaling and trafficking. May associate with nucleic acids and regulate gene expression at the transcriptional or post-transcriptional level. The polypeptide is Protein IQ-DOMAIN 31 (Arabidopsis thaliana (Mouse-ear cress)).